A 159-amino-acid chain; its full sequence is SsrA-binding protein (159 aa).

The disordered stretch occupies residues 137 to 159 (KRQTEKERDWEREKQRLFQRDQR).

It belongs to the SmpB family.

The protein localises to the cytoplasm. In terms of biological role, required for rescue of stalled ribosomes mediated by trans-translation. Binds to transfer-messenger RNA (tmRNA), required for stable association of tmRNA with ribosomes. tmRNA and SmpB together mimic tRNA shape, replacing the anticodon stem-loop with SmpB. tmRNA is encoded by the ssrA gene; the 2 termini fold to resemble tRNA(Ala) and it encodes a 'tag peptide', a short internal open reading frame. During trans-translation Ala-aminoacylated tmRNA acts like a tRNA, entering the A-site of stalled ribosomes, displacing the stalled mRNA. The ribosome then switches to translate the ORF on the tmRNA; the nascent peptide is terminated with the 'tag peptide' encoded by the tmRNA and targeted for degradation. The ribosome is freed to recommence translation, which seems to be the essential function of trans-translation. The chain is SsrA-binding protein from Cellvibrio japonicus (strain Ueda107) (Pseudomonas fluorescens subsp. cellulosa).